The following is a 104-amino-acid chain: Iron-sulfur cluster assembly protein CyaY (104 aa).

This sequence belongs to the frataxin family.

Involved in iron-sulfur (Fe-S) cluster assembly. May act as a regulator of Fe-S biogenesis. This is Iron-sulfur cluster assembly protein CyaY from Tolumonas auensis (strain DSM 9187 / NBRC 110442 / TA 4).